Consider the following 455-residue polypeptide: Peroxisomal membrane protein PEX3 (455 aa).

A compositionally biased stretch (polar residues) spans 113-125 (TVLSDDFSTSQEG). The disordered stretch occupies residues 113–135 (TVLSDDFSTSQEGAISEDTNKPP). The chain crosses the membrane as a helical span at residues 155–171 (FLTLIYCESLLIVFLHL).

Belongs to the peroxin-3 family. In terms of assembly, component of the peroxisomal docking complex, composed of at least PEX3, PEX13, PEX14 and PEX17. Component of the peroxisomal translocation complex, composed of at least PEX3, PEX2, PEX10 and PEX12. Interacts with PEX19. Interacts with the pexophagy receptor ATG30.

Its subcellular location is the peroxisome membrane. In terms of biological role, peroxisomal membrane protein required for peroxisome biosynthesis. Shared component of both the peroxisomal docking complex and the peroxisomal translocation complex. The two types of peroxisomal matrix targeting signals, PTS1 and PTS2, are first recognized in the cytosol by their receptors PEX5 and PEX7, respectively, which then carry the cargo to the peroxisomal membrane. The peroxisomal targeting signal (PTS) receptor-cargo complexes interact with peroxisomal membrane protein (PMP) components of the docking complex. They have then additional downstream interactions with the translocation complex, leading to the transport of fully folded and oligomerized cargo into the peroxisome matrix. PEX3 acts as an anchoring site for PEX19 on the peroxisomal membrane and thus plays a crucial role in the assembly of the peroxisomal translocation complex. Is also essential for the interaction between the two complexes. Finally. PEX3 activates selective autophagy of peroxisomes (pexophagy) via interaction with the pexophagy receptor ATG30. The chain is Peroxisomal membrane protein PEX3 from Komagataella pastoris (Yeast).